The sequence spans 834 residues: Serine/threonine-protein kinase TNNI3K (834 aa).

The N-myristoyl glycine moiety is linked to residue Gly-2. Residues 21 to 49 (SESYAIIIERLEDDLQIKENEFQELRHIF) are a coiled coil. 10 ANK repeats span residues 66 to 96 (RGLS…RPSR), 100 to 129 (NGFP…DVQQ), 133 to 162 (GGLT…NVNV), 166 to 195 (VFFT…DVNV), 199 to 229 (VGDR…DVNA), 233 to 262 (EDHV…EVQP), 268 to 297 (YGDT…TESL), 303 to 334 (FSET…NINH), 338 to 367 (DGHT…DMNL), and 380 to 409 (DEQT…PQDE). The Protein kinase domain occupies 462–722 (IEFHEIIGSG…EVVRKLEECL (261 aa)). Residues 468–476 (IGSGSFGKV) and Lys-489 each bind ATP. The active-site Proton acceptor is Asp-587. Residues 815 to 834 (PMSPMHLHSRRNSGSFEDGN) are disordered.

Belongs to the protein kinase superfamily. TKL Ser/Thr protein kinase family. MAP kinase kinase kinase subfamily. In terms of assembly, interacts with TNNI3, ACTC, ACTA1, MYBPC3, AIP, FABP3 and HADHB. Requires Mg(2+) as cofactor. Autophosphorylated.

The protein localises to the nucleus. The protein resides in the cytoplasm. The enzyme catalyses L-seryl-[protein] + ATP = O-phospho-L-seryl-[protein] + ADP + H(+). It carries out the reaction L-threonyl-[protein] + ATP = O-phospho-L-threonyl-[protein] + ADP + H(+). May play a role in cardiac physiology. This is Serine/threonine-protein kinase TNNI3K from Mus musculus (Mouse).